The following is a 341-amino-acid chain: Biotin synthase (341 aa).

One can recognise a Radical SAM core domain in the interval 56–285; that stretch reads ADIQRAALLS…KARVRLSAGR (230 aa). [4Fe-4S] cluster contacts are provided by Cys-71, Cys-75, and Cys-78. [2Fe-2S] cluster-binding residues include Cys-116, Cys-148, Cys-208, and Arg-280.

The protein belongs to the radical SAM superfamily. Biotin synthase family. In terms of assembly, homodimer. [4Fe-4S] cluster is required as a cofactor. [2Fe-2S] cluster serves as cofactor.

It carries out the reaction (4R,5S)-dethiobiotin + (sulfur carrier)-SH + 2 reduced [2Fe-2S]-[ferredoxin] + 2 S-adenosyl-L-methionine = (sulfur carrier)-H + biotin + 2 5'-deoxyadenosine + 2 L-methionine + 2 oxidized [2Fe-2S]-[ferredoxin]. The protein operates within cofactor biosynthesis; biotin biosynthesis; biotin from 7,8-diaminononanoate: step 2/2. Functionally, catalyzes the conversion of dethiobiotin (DTB) to biotin by the insertion of a sulfur atom into dethiobiotin via a radical-based mechanism. In Methylorubrum populi (strain ATCC BAA-705 / NCIMB 13946 / BJ001) (Methylobacterium populi), this protein is Biotin synthase.